The sequence spans 206 residues: Large ribosomal subunit protein uL4 (206 aa).

A disordered region spans residues 55–80 (AFVSGGGAKPWRQKGTGRARSGSNRS).

Belongs to the universal ribosomal protein uL4 family. Part of the 50S ribosomal subunit.

In terms of biological role, one of the primary rRNA binding proteins, this protein initially binds near the 5'-end of the 23S rRNA. It is important during the early stages of 50S assembly. It makes multiple contacts with different domains of the 23S rRNA in the assembled 50S subunit and ribosome. Functionally, forms part of the polypeptide exit tunnel. The chain is Large ribosomal subunit protein uL4 from Nitratidesulfovibrio vulgaris (strain DSM 19637 / Miyazaki F) (Desulfovibrio vulgaris).